Reading from the N-terminus, the 282-residue chain is Bifunctional protein FolD (282 aa).

NADP(+) contacts are provided by residues 164–166 and S189; that span reads GRS.

The protein belongs to the tetrahydrofolate dehydrogenase/cyclohydrolase family. As to quaternary structure, homodimer.

The catalysed reaction is (6R)-5,10-methylene-5,6,7,8-tetrahydrofolate + NADP(+) = (6R)-5,10-methenyltetrahydrofolate + NADPH. It carries out the reaction (6R)-5,10-methenyltetrahydrofolate + H2O = (6R)-10-formyltetrahydrofolate + H(+). It functions in the pathway one-carbon metabolism; tetrahydrofolate interconversion. In terms of biological role, catalyzes the oxidation of 5,10-methylenetetrahydrofolate to 5,10-methenyltetrahydrofolate and then the hydrolysis of 5,10-methenyltetrahydrofolate to 10-formyltetrahydrofolate. This Lactobacillus gasseri (strain ATCC 33323 / DSM 20243 / BCRC 14619 / CIP 102991 / JCM 1131 / KCTC 3163 / NCIMB 11718 / NCTC 13722 / AM63) protein is Bifunctional protein FolD.